Here is a 333-residue protein sequence, read N- to C-terminus: Adenosine deaminase (333 aa).

Residues His12 and His14 each coordinate Zn(2+). 3 residues coordinate substrate: His14, Asp16, and Gly170. Zn(2+) is bound at residue His197. Glu200 functions as the Proton donor in the catalytic mechanism. Position 278 (Asp278) interacts with Zn(2+). Position 279 (Asp279) interacts with substrate.

Belongs to the metallo-dependent hydrolases superfamily. Adenosine and AMP deaminases family. Adenosine deaminase subfamily. It depends on Zn(2+) as a cofactor.

The catalysed reaction is adenosine + H2O + H(+) = inosine + NH4(+). It catalyses the reaction 2'-deoxyadenosine + H2O + H(+) = 2'-deoxyinosine + NH4(+). In terms of biological role, catalyzes the hydrolytic deamination of adenosine and 2-deoxyadenosine. This Salmonella schwarzengrund (strain CVM19633) protein is Adenosine deaminase.